The sequence spans 159 residues: 2-C-methyl-D-erythritol 2,4-cyclodiphosphate synthase (159 aa).

A divalent metal cation is bound by residues D10 and H12. Residues 10–12 (DVH) and 36–37 (HS) contribute to the 4-CDP-2-C-methyl-D-erythritol 2-phosphate site. H44 contacts a divalent metal cation. Residues 58-60 (DIG), 134-137 (TTSE), F141, and R144 each bind 4-CDP-2-C-methyl-D-erythritol 2-phosphate.

It belongs to the IspF family. As to quaternary structure, homotrimer. A divalent metal cation is required as a cofactor.

The catalysed reaction is 4-CDP-2-C-methyl-D-erythritol 2-phosphate = 2-C-methyl-D-erythritol 2,4-cyclic diphosphate + CMP. The protein operates within isoprenoid biosynthesis; isopentenyl diphosphate biosynthesis via DXP pathway; isopentenyl diphosphate from 1-deoxy-D-xylulose 5-phosphate: step 4/6. Its function is as follows. Involved in the biosynthesis of isopentenyl diphosphate (IPP) and dimethylallyl diphosphate (DMAPP), two major building blocks of isoprenoid compounds. Catalyzes the conversion of 4-diphosphocytidyl-2-C-methyl-D-erythritol 2-phosphate (CDP-ME2P) to 2-C-methyl-D-erythritol 2,4-cyclodiphosphate (ME-CPP) with a corresponding release of cytidine 5-monophosphate (CMP). The chain is 2-C-methyl-D-erythritol 2,4-cyclodiphosphate synthase from Cereibacter sphaeroides (strain ATCC 17025 / ATH 2.4.3) (Rhodobacter sphaeroides).